Here is a 195-residue protein sequence, read N- to C-terminus: Pyridoxal 5'-phosphate synthase subunit PdxT (195 aa).

Residue 46 to 48 (GES) coordinates L-glutamine. Residue C78 is the Nucleophile of the active site. Residues R107 and 136–137 (IR) contribute to the L-glutamine site. Catalysis depends on charge relay system residues H173 and E175.

It belongs to the glutaminase PdxT/SNO family. In terms of assembly, in the presence of PdxS, forms a dodecamer of heterodimers. Only shows activity in the heterodimer.

The catalysed reaction is aldehydo-D-ribose 5-phosphate + D-glyceraldehyde 3-phosphate + L-glutamine = pyridoxal 5'-phosphate + L-glutamate + phosphate + 3 H2O + H(+). It catalyses the reaction L-glutamine + H2O = L-glutamate + NH4(+). It participates in cofactor biosynthesis; pyridoxal 5'-phosphate biosynthesis. Its function is as follows. Catalyzes the hydrolysis of glutamine to glutamate and ammonia as part of the biosynthesis of pyridoxal 5'-phosphate. The resulting ammonia molecule is channeled to the active site of PdxS. The polypeptide is Pyridoxal 5'-phosphate synthase subunit PdxT (Dehalococcoides mccartyi (strain ATCC BAA-2100 / JCM 16839 / KCTC 5957 / BAV1)).